A 399-amino-acid polypeptide reads, in one-letter code: Tryptophan synthase beta chain (399 aa).

At K91 the chain carries N6-(pyridoxal phosphate)lysine.

It belongs to the TrpB family. Tetramer of two alpha and two beta chains. Requires pyridoxal 5'-phosphate as cofactor.

The enzyme catalyses (1S,2R)-1-C-(indol-3-yl)glycerol 3-phosphate + L-serine = D-glyceraldehyde 3-phosphate + L-tryptophan + H2O. It participates in amino-acid biosynthesis; L-tryptophan biosynthesis; L-tryptophan from chorismate: step 5/5. The beta subunit is responsible for the synthesis of L-tryptophan from indole and L-serine. This is Tryptophan synthase beta chain from Shouchella clausii (strain KSM-K16) (Alkalihalobacillus clausii).